Here is a 475-residue protein sequence, read N- to C-terminus: Integrator complex subunit 15 (475 aa).

A disordered region spans residues 402–444 (YPHIHPGRPSPLSPHSPHQSTLSSPHSPHTVLTAHPTHPALAP). The segment covering 416-430 (HSPHQSTLSSPHSPH) has biased composition (low complexity).

It belongs to the Integrator subunit 15 family. As to quaternary structure, component of the Integrator complex, composed of core subunits INTS1, INTS2, INTS3, INTS4, INTS5, INTS6, INTS7, INTS8, INTS9/RC74, INTS10, INTS11/CPSF3L, INTS12, INTS13, INTS14 and INTS15. The core complex associates with protein phosphatase 2A subunits PPP2CA and PPP2R1A, to form the Integrator-PP2A (INTAC) complex. INTS15 is part of the tail subcomplex, composed of INTS10, INTS13, INTS14 and INTS15.

It localises to the nucleus. Its subcellular location is the chromosome. Functionally, component of the integrator complex, a multiprotein complex that terminates RNA polymerase II (Pol II) transcription in the promoter-proximal region of genes. The integrator complex provides a quality checkpoint during transcription elongation by driving premature transcription termination of transcripts that are unfavorably configured for transcriptional elongation: the complex terminates transcription by (1) catalyzing dephosphorylation of the C-terminal domain (CTD) of Pol II subunit POLR2A/RPB1 and SUPT5H/SPT5, (2) degrading the exiting nascent RNA transcript via endonuclease activity and (3) promoting the release of Pol II from bound DNA. The integrator complex is also involved in terminating the synthesis of non-coding Pol II transcripts, such as enhancer RNAs (eRNAs), small nuclear RNAs (snRNAs), telomerase RNAs and long non-coding RNAs (lncRNAs). INTS15 is part of the integrator tail module that acts as a platform for the recruitment of transcription factors at promoters. Within the integrator complex, INTS15 is required to bridge different integrator modules. This chain is Integrator complex subunit 15 (ints15), found in Danio rerio (Zebrafish).